Here is a 157-residue protein sequence, read N- to C-terminus: Transcriptional repressor NrdR (157 aa).

Residues 3 to 34 (CPFCSATDTKVIDSRLVADGHQVRRRRECLLC) fold into a zinc finger. In terms of domain architecture, ATP-cone spans 49-139 (PRVVKQDGSR…VYRAFEDVSE (91 aa)).

This sequence belongs to the NrdR family. The cofactor is Zn(2+).

Its function is as follows. Negatively regulates transcription of bacterial ribonucleotide reductase nrd genes and operons by binding to NrdR-boxes. The polypeptide is Transcriptional repressor NrdR (Shewanella loihica (strain ATCC BAA-1088 / PV-4)).